We begin with the raw amino-acid sequence, 509 residues long: Maturase K (509 aa).

This sequence belongs to the intron maturase 2 family. MatK subfamily.

It localises to the plastid. The protein localises to the chloroplast. In terms of biological role, usually encoded in the trnK tRNA gene intron. Probably assists in splicing its own and other chloroplast group II introns. This is Maturase K from Thuja occidentalis (Northern white-cedar).